The chain runs to 168 residues: Dual-action ribosomal maturation protein DarP (168 aa).

Belongs to the DarP family.

It is found in the cytoplasm. Functionally, member of a network of 50S ribosomal subunit biogenesis factors which assembles along the 30S-50S interface, preventing incorrect 23S rRNA structures from forming. Promotes peptidyl transferase center (PTC) maturation. The protein is Dual-action ribosomal maturation protein DarP of Neisseria meningitidis serogroup B (strain ATCC BAA-335 / MC58).